A 181-amino-acid polypeptide reads, in one-letter code: Large ribosomal subunit protein uL5 (181 aa).

This sequence belongs to the universal ribosomal protein uL5 family. Part of the 50S ribosomal subunit; part of the 5S rRNA/L5/L18/L25 subcomplex. Contacts the 5S rRNA and the P site tRNA. Forms a bridge to the 30S subunit in the 70S ribosome.

In terms of biological role, this is one of the proteins that bind and probably mediate the attachment of the 5S RNA into the large ribosomal subunit, where it forms part of the central protuberance. In the 70S ribosome it contacts protein S13 of the 30S subunit (bridge B1b), connecting the 2 subunits; this bridge is implicated in subunit movement. Contacts the P site tRNA; the 5S rRNA and some of its associated proteins might help stabilize positioning of ribosome-bound tRNAs. The protein is Large ribosomal subunit protein uL5 of Colwellia psychrerythraea (strain 34H / ATCC BAA-681) (Vibrio psychroerythus).